We begin with the raw amino-acid sequence, 293 residues long: Methylsterol monooxygenase 1 (293 aa).

A run of 2 helical transmembrane segments spans residues 55-75 (LIVH…FQFI) and 100-120 (VLLF…YYFT). In terms of domain architecture, Fatty acid hydroxylase spans 145–274 (CAVIEDTWHY…FTWWDRIFGT (130 aa)). The short motif at 157–161 (HRLLH) is the Histidine box-1 element. Residues 170–174 (HKIHH) carry the Histidine box-2 motif. A helical membrane pass occupies residues 199 to 219 (FFIGIMLLCDHVILLWAWVTV). The Histidine box-3 motif lies at 249–255 (HHDFHHM).

It belongs to the sterol desaturase family. Fe cation is required as a cofactor. Post-translationally, ubiquitinated by MARCHF6, leading to proteasomal degradation.

The protein resides in the endoplasmic reticulum membrane. It carries out the reaction 4,4-dimethyl-5alpha-cholest-7-en-3beta-ol + 6 Fe(II)-[cytochrome b5] + 3 O2 + 5 H(+) = 4alpha-carboxy-4beta-methyl-5alpha-cholest-7-ene-3beta-ol + 6 Fe(III)-[cytochrome b5] + 4 H2O. The catalysed reaction is 4,4-dimethyl-5alpha-cholesta-8,24-dien-3beta-ol + 6 Fe(II)-[cytochrome b5] + 3 O2 + 5 H(+) = 4beta-methylzymosterol-4alpha-carboxylate + 6 Fe(III)-[cytochrome b5] + 4 H2O. The enzyme catalyses 4alpha-methylzymosterol + 6 Fe(II)-[cytochrome b5] + 3 O2 + 5 H(+) = 4alpha-carboxyzymosterol + 6 Fe(III)-[cytochrome b5] + 4 H2O. It catalyses the reaction 4alpha-methyl-5alpha-cholest-7-en-3beta-ol + 6 Fe(II)-[cytochrome b5] + 3 O2 + 5 H(+) = 4alpha-carboxy-5alpha-cholest-7-en-3beta-ol + 6 Fe(III)-[cytochrome b5] + 4 H2O. It carries out the reaction 4,4-dimethyl-5alpha-cholest-8-en-3beta-ol + 6 Fe(II)-[cytochrome b5] + 3 O2 + 5 H(+) = 4alpha-carboxy-4beta-methyl-5alpha-cholest-8-en-3beta-ol + 6 Fe(III)-[cytochrome b5] + 4 H2O. The catalysed reaction is 4alpha-methyl-5alpha-cholest-8-en-3beta-ol + 6 Fe(II)-[cytochrome b5] + 3 O2 + 5 H(+) = 4alpha-carboxy-5alpha-cholest-8-ene-3beta-ol + 6 Fe(III)-[cytochrome b5] + 4 H2O. It functions in the pathway steroid biosynthesis; zymosterol biosynthesis; zymosterol from lanosterol: step 3/6. The protein operates within steroid biosynthesis; cholesterol biosynthesis. Its function is as follows. Catalyzes the three-step monooxygenation required for the demethylation of 4,4-dimethyl and 4alpha-methylsterols, which can be subsequently metabolized to cholesterol. This chain is Methylsterol monooxygenase 1 (MSMO1), found in Sus scrofa (Pig).